Consider the following 205-residue polypeptide: Basonuclin zinc finger protein homolog (205 aa).

2 C2H2-type zinc fingers span residues 107-130 (VACD…SAVH) and 135-164 (HTCT…PKLH). Positions 145-168 (QFSSRRSRNRHSSNNNPKLHMPES) are disordered.

In terms of tissue distribution, expressed in the VA and VB motor neurons and at lower levels in the SABV neuron pair.

The protein localises to the nucleus. Functionally, probable transcription factor. Involved in motor neuron fate determination and maintenance, acting as a transcriptional repressor to counteract gene activation by transcription factor unc-3 in a subset of motor neurons. Required throughout development to repress transcription by unc-3, probably acting by binding to specific promoter elements. Represses expression of DA and DB motor neuron-specific effector genes, such as unc-129 and unc-53, in VA and VB motor neurons. This Caenorhabditis elegans protein is Basonuclin zinc finger protein homolog.